The following is a 58-amino-acid chain: UPF0391 membrane protein Shewmr4_2671 (58 aa).

2 consecutive transmembrane segments (helical) span residues 6–26 (LMFL…IAGA) and 28–48 (AGIA…SLLV).

Belongs to the UPF0391 family.

Its subcellular location is the cell membrane. The sequence is that of UPF0391 membrane protein Shewmr4_2671 from Shewanella sp. (strain MR-4).